Consider the following 171-residue polypeptide: S-ribosylhomocysteine lyase (171 aa).

Residues H54, H58, and C128 each coordinate Fe cation.

Belongs to the LuxS family. In terms of assembly, homodimer. The cofactor is Fe cation.

The enzyme catalyses S-(5-deoxy-D-ribos-5-yl)-L-homocysteine = (S)-4,5-dihydroxypentane-2,3-dione + L-homocysteine. Involved in the synthesis of autoinducer 2 (AI-2) which is secreted by bacteria and is used to communicate both the cell density and the metabolic potential of the environment. The regulation of gene expression in response to changes in cell density is called quorum sensing. Catalyzes the transformation of S-ribosylhomocysteine (RHC) to homocysteine (HC) and 4,5-dihydroxy-2,3-pentadione (DPD). This chain is S-ribosylhomocysteine lyase, found in Edwardsiella ictaluri (strain 93-146).